The following is a 493-amino-acid chain: Leucine-rich repeat-containing protein 14 (493 aa).

Residues 111–146 (KHTLRVLDMTGLLDDGVEQDPGTMSMWDCTAAVART) form an LRR 1; degenerate repeat. An LRR 2; degenerate repeat occupies 194 to 218 (RLCCRDLRAEDLPMRNTVALLQLLD). The LRR 3; degenerate repeat unit spans residues 219 to 246 (AGCLRRVDLRFNNLGLRGLSVIIPHVAR). An LRR 4; degenerate repeat occupies 247–282 (FQHLASLRLHYVHGDSRQPSVDGEDNFRYFLAQMGR). LRR repeat units follow at residues 283–307 (FTCL…LSTL), 308–339 (QSPL…VHLK), 340–360 (KLDL…QGLL), 364–391 (AATL…VLTR), and 392–416 (CASL…LLRD).

This sequence belongs to the PRAME family. LRRC14 subfamily. Interacts with IKBKB; disrupts IKBKB-IKBKG interaction preventing I-kappa-B-kinase (IKK) core complex formation and leading to a decrease of IKBKB phosphorylation and NF-kappaB activation. Interacts with CHUK.

The protein resides in the cytoplasm. Negatively regulates Toll-like receptor-mediated NF-kappa-B signaling by disrupting IKK core complex formation through interaction with IKBKB. This chain is Leucine-rich repeat-containing protein 14, found in Bos taurus (Bovine).